The chain runs to 37 residues: Mu-agatoxin-Aa1d (37 aa).

Intrachain disulfides connect C2-C18, C9-C23, C17-C33, and C25-C31. Asparagine amide is present on N37.

This sequence belongs to the neurotoxin 07 (Beta/delta-agtx) family. 03 (aga-4) subfamily. Aga sub-subfamily. As to expression, expressed by the venom gland.

Its subcellular location is the secreted. Insecticidal neurotoxin that induces an irreversible spastic paralysis when injected into insects. Modifies presynaptic voltage-gated sodium channels (Nav), causing them to open at the normal resting potential of the nerve. This leads to spontaneous release of neurotransmitter and repetitive action potentials in motor neurons. In Agelenopsis aperta (North American funnel-web spider), this protein is Mu-agatoxin-Aa1d.